A 485-amino-acid chain; its full sequence is Warthog protein 1 (485 aa).

Residues 1–21 (MMVMNPLTATFLAALIGTAAS) form the signal peptide. Positions 236 to 258 (DQRLSPSTDVQSDSYVSPTEADP) are disordered. Over residues 239–252 (LSPSTDVQSDSYVS) the composition is skewed to polar residues.

Belongs to the hedgehog family. Post-translationally, the C-terminal domain displays an autoproteolysis activity.

It is found in the secreted. It localises to the cell surface. The protein resides in the cell membrane. The protein localises to the extracellular space. In terms of biological role, intercellular signal essential for a variety of patterning events during development. In Caenorhabditis elegans, this protein is Warthog protein 1 (wrt-1).